A 429-amino-acid chain; its full sequence is Histidinol dehydrogenase (429 aa).

Positions 130, 191, and 214 each coordinate NAD(+). Substrate is bound by residues Ser-237, Gln-259, and His-262. The Zn(2+) site is built by Gln-259 and His-262. Active-site proton acceptor residues include Glu-327 and His-328. Substrate is bound by residues His-328, Asp-361, Glu-415, and His-420. Position 361 (Asp-361) interacts with Zn(2+). His-420 contributes to the Zn(2+) binding site.

The protein belongs to the histidinol dehydrogenase family. It depends on Zn(2+) as a cofactor.

It catalyses the reaction L-histidinol + 2 NAD(+) + H2O = L-histidine + 2 NADH + 3 H(+). It participates in amino-acid biosynthesis; L-histidine biosynthesis; L-histidine from 5-phospho-alpha-D-ribose 1-diphosphate: step 9/9. Its function is as follows. Catalyzes the sequential NAD-dependent oxidations of L-histidinol to L-histidinaldehyde and then to L-histidine. This is Histidinol dehydrogenase from Geobacter sulfurreducens (strain ATCC 51573 / DSM 12127 / PCA).